Reading from the N-terminus, the 249-residue chain is Myelin protein P0 (249 aa).

Residues 1 to 29 (MALGAIGDGRLLLLLVGLLSASGPSPTLA) form the signal peptide. Residues 30–143 (IHVYTPREVY…DIVGKSSQVT (114 aa)) form the Ig-like V-type domain. Residues 30–153 (IHVYTPREVY…LYVLEKVPTR (124 aa)) are Extracellular-facing. A disulfide bridge connects residues Cys50 and Cys127. The N-linked (GlcNAc...) asparagine glycan is linked to Asn122. The chain crosses the membrane as a helical span at residues 154–179 (YGVVLGSIIGGVLLLVALLVAVVYLV). Over 180–249 (RFCWLRRQAV…APGEARKDKK (70 aa)) the chain is Cytoplasmic. Residues 227-249 (RSAKAAAEKKSKGAPGEARKDKK) are disordered.

Belongs to the myelin P0 protein family. As to expression, found only in peripheral nervous system Schwann cells.

Its subcellular location is the cell membrane. Its function is as follows. Is an adhesion molecule necessary for normal myelination in the peripheral nervous system. It mediates adhesion between adjacent myelin wraps and ultimately drives myelin compaction. The polypeptide is Myelin protein P0 (MPZ) (Gallus gallus (Chicken)).